The chain runs to 343 residues: L-lysine cyclodeaminase (343 aa).

The protein belongs to the ornithine cyclodeaminase/mu-crystallin family. NAD(+) serves as cofactor.

The catalysed reaction is L-lysine = L-pipecolate + NH4(+). Its pathway is antibiotic biosynthesis. Inhibited by nipecotic acid and thiazolidine-2-carboxylic acid. In terms of biological role, converts L-lysine to L-pipecolate, which is incorporated into multiple secondary metabolite products, including rapamycin, tobulysin, virginiamycin and pristinamycin. The protein is L-lysine cyclodeaminase (rapL) of Streptomyces rapamycinicus (strain ATCC 29253 / DSM 41530 / NRRL 5491 / AYB-994) (Streptomyces hygroscopicus (strain ATCC 29253)).